A 310-amino-acid chain; its full sequence is uncharacterized protein (310 aa).

This sequence belongs to the YiaX1 family.

This is an uncharacterized protein from Salmonella typhimurium (strain LT2 / SGSC1412 / ATCC 700720).